The following is a 159-amino-acid chain: Phosphopantetheine adenylyltransferase (159 aa).

Thr-10 is a binding site for substrate. Residues 10 to 11 (TF) and His-18 each bind ATP. Substrate is bound by residues Lys-42, Met-74, and Arg-88. ATP is bound by residues 89–91 (GLR), Glu-99, and 124–130 (WSFISSS).

This sequence belongs to the bacterial CoaD family. In terms of assembly, homohexamer. Requires Mg(2+) as cofactor.

The protein resides in the cytoplasm. It carries out the reaction (R)-4'-phosphopantetheine + ATP + H(+) = 3'-dephospho-CoA + diphosphate. It functions in the pathway cofactor biosynthesis; coenzyme A biosynthesis; CoA from (R)-pantothenate: step 4/5. Its function is as follows. Reversibly transfers an adenylyl group from ATP to 4'-phosphopantetheine, yielding dephospho-CoA (dPCoA) and pyrophosphate. This Yersinia pseudotuberculosis serotype O:3 (strain YPIII) protein is Phosphopantetheine adenylyltransferase.